The chain runs to 456 residues: Bifunctional protein GlmU (456 aa).

Positions 1-229 are pyrophosphorylase; that stretch reads MTKKALSAVI…VMEVEGANNR (229 aa). UDP-N-acetyl-alpha-D-glucosamine-binding positions include 11–14, K25, Q76, 81–82, 103–105, G140, E154, N169, and N227; these read LAAG, GT, and YGD. Position 105 (D105) interacts with Mg(2+). A Mg(2+)-binding site is contributed by N227. Positions 230 to 250 are linker; the sequence is LQLAALERYFQNKQASKLLLE. The segment at 251–456 is N-acetyltransferase; it reads GVMIYDPARF…QGWQRPIKKK (206 aa). R333 and K351 together coordinate UDP-N-acetyl-alpha-D-glucosamine. Catalysis depends on H363, which acts as the Proton acceptor. Positions 366 and 377 each coordinate UDP-N-acetyl-alpha-D-glucosamine. Residues A380, 386–387, S405, A423, and R440 each bind acetyl-CoA; that span reads NY.

It in the N-terminal section; belongs to the N-acetylglucosamine-1-phosphate uridyltransferase family. In the C-terminal section; belongs to the transferase hexapeptide repeat family. As to quaternary structure, homotrimer. Requires Mg(2+) as cofactor.

The protein resides in the cytoplasm. It carries out the reaction alpha-D-glucosamine 1-phosphate + acetyl-CoA = N-acetyl-alpha-D-glucosamine 1-phosphate + CoA + H(+). It catalyses the reaction N-acetyl-alpha-D-glucosamine 1-phosphate + UTP + H(+) = UDP-N-acetyl-alpha-D-glucosamine + diphosphate. It functions in the pathway nucleotide-sugar biosynthesis; UDP-N-acetyl-alpha-D-glucosamine biosynthesis; N-acetyl-alpha-D-glucosamine 1-phosphate from alpha-D-glucosamine 6-phosphate (route II): step 2/2. It participates in nucleotide-sugar biosynthesis; UDP-N-acetyl-alpha-D-glucosamine biosynthesis; UDP-N-acetyl-alpha-D-glucosamine from N-acetyl-alpha-D-glucosamine 1-phosphate: step 1/1. Its pathway is bacterial outer membrane biogenesis; LPS lipid A biosynthesis. In terms of biological role, catalyzes the last two sequential reactions in the de novo biosynthetic pathway for UDP-N-acetylglucosamine (UDP-GlcNAc). The C-terminal domain catalyzes the transfer of acetyl group from acetyl coenzyme A to glucosamine-1-phosphate (GlcN-1-P) to produce N-acetylglucosamine-1-phosphate (GlcNAc-1-P), which is converted into UDP-GlcNAc by the transfer of uridine 5-monophosphate (from uridine 5-triphosphate), a reaction catalyzed by the N-terminal domain. The polypeptide is Bifunctional protein GlmU (Haemophilus influenzae (strain ATCC 51907 / DSM 11121 / KW20 / Rd)).